The primary structure comprises 292 residues: NAD kinase (292 aa).

Asp73 functions as the Proton acceptor in the catalytic mechanism. Residues 73 to 74 (DG), 147 to 148 (NE), His158, Arg175, Asp177, 188 to 193 (TGYSLS), and Gln247 contribute to the NAD(+) site.

The protein belongs to the NAD kinase family. A divalent metal cation serves as cofactor.

It is found in the cytoplasm. It catalyses the reaction NAD(+) + ATP = ADP + NADP(+) + H(+). Involved in the regulation of the intracellular balance of NAD and NADP, and is a key enzyme in the biosynthesis of NADP. Catalyzes specifically the phosphorylation on 2'-hydroxyl of the adenosine moiety of NAD to yield NADP. This Buchnera aphidicola subsp. Schizaphis graminum (strain Sg) protein is NAD kinase.